The following is a 579-amino-acid chain: Nuclear hormone receptor family member nhr-71 (579 aa).

The segment at residues 8–83 is a DNA-binding region (nuclear receptor); that stretch reads SQECMVCSAP…AGMKIGAVQP (76 aa). NR C4-type zinc fingers lie at residues 11-31 and 47-71; these read CMVC…CRSC and CKHT…FTKC. Disordered stretches follow at residues 82–124 and 168–189; these read QPRR…SDGP and EPIP…PNDD. 2 stretches are compositionally biased toward polar residues: residues 106-124 and 171-186; these read SMNN…SDGP and PSTS…QSSP. Positions 189-452 constitute an NR LBD domain; sequence DEQQEFNHLV…KFWYETLCYA (264 aa).

Belongs to the nuclear hormone receptor family.

It localises to the nucleus. Functionally, orphan nuclear receptor. The protein is Nuclear hormone receptor family member nhr-71 (nhr-71) of Caenorhabditis elegans.